The primary structure comprises 115 residues: U3-lycotoxin-Ls1a (115 aa).

The first 20 residues, 1 to 20, serve as a signal peptide directing secretion; sequence MKFVLLFGVFLVTLFSYSSA. Residues 21–44 constitute a propeptide that is removed on maturation; it reads EMLDDFDQADEDELLSLIEKEEAR. Cystine bridges form between Cys-48–Cys-63, Cys-55–Cys-72, Cys-62–Cys-87, and Cys-74–Cys-85.

The protein belongs to the neurotoxin 19 (CSTX) family. 01 subfamily. As to expression, expressed by the venom gland.

The protein localises to the secreted. The chain is U3-lycotoxin-Ls1a from Lycosa singoriensis (Wolf spider).